A 498-amino-acid polypeptide reads, in one-letter code: Lysine--tRNA ligase (498 aa).

Mg(2+)-binding residues include Glu407 and Glu414.

The protein belongs to the class-II aminoacyl-tRNA synthetase family. As to quaternary structure, homodimer. Requires Mg(2+) as cofactor.

The protein resides in the cytoplasm. The catalysed reaction is tRNA(Lys) + L-lysine + ATP = L-lysyl-tRNA(Lys) + AMP + diphosphate. This Rhizobium etli (strain ATCC 51251 / DSM 11541 / JCM 21823 / NBRC 15573 / CFN 42) protein is Lysine--tRNA ligase.